Consider the following 91-residue polypeptide: uncharacterized protein (91 aa).

3 helical membrane passes run 6 to 26 (AAAV…INFF), 37 to 57 (MPVF…FVSI), and 68 to 88 (IVLN…GALL).

It is found in the cell membrane. This is an uncharacterized protein from Bacillus subtilis (strain 168).